The chain runs to 568 residues: MARVEL domain-containing protein 2 (568 aa).

2 disordered regions span residues 1-72 (MSGG…YPSD) and 116-163 (SGGV…SYNS). The Cytoplasmic portion of the chain corresponds to 1-211 (MSGGGSSSGP…YMKSWAGLLR (211 aa)). The span at 29–46 (ADPRHPETNLETLHDRDL) shows a compositional bias: basic and acidic residues. Residues 52–62 (PLPPPPLPLHP) are compositionally biased toward pro residues. The region spanning 205-379 (SWAGLLRILC…SAMVSLKLWR (175 aa)) is the MARVEL domain. The chain crosses the membrane as a helical span at residues 212–232 (ILCIVELLLGAAVFACVTAYI). Residues 233–266 (HKDNEWYNMFGYSQPYGYTASMQGGYYYSGPKTP) are Extracellular-facing. Residues 267 to 287 (FVLVVAGLAWIVTIILLVLGM) traverse the membrane as a helical segment. Over 288 to 303 (SMYYRTILLDSTWWPL) the chain is Cytoplasmic. The chain crosses the membrane as a helical span at residues 304 to 324 (TEFGINISLFILYMAGAIVYV). Residues 325 to 354 (NDTNRGGLCYYQLFNTPVNASFCRVEGGQT) lie on the Extracellular side of the membrane. The chain crosses the membrane as a helical span at residues 355-375 (AAIIFLFVSMLMYFISAMVSL). Residues 376–568 (KLWRHESARK…KVMDWNDGYN (193 aa)) are Cytoplasmic-facing. One can recognise an OCEL domain in the interval 451–562 (PDYVAKYQAI…RIQEYDKVMD (112 aa)). Residues 462–559 (AEDERERYKA…IKQRIQEYDK (98 aa)) are a coiled coil.

This sequence belongs to the ELL/occludin family.

Its subcellular location is the cell membrane. It localises to the cell junction. The protein localises to the tight junction. Functionally, may play a role in the formation of the epithelial barrier. The polypeptide is MARVEL domain-containing protein 2 (marveld2) (Xenopus tropicalis (Western clawed frog)).